Reading from the N-terminus, the 100-residue chain is Ribosomal biogenesis factor (100 aa).

The residue at position 19 (Ser19) is a Phosphoserine. Lys21 bears the N6-acetyllysine mark. Ser69 is subject to Phosphoserine.

As to quaternary structure, associates with the pre-60S ribosomal particles.

It localises to the nucleus. The protein resides in the nucleolus. Functionally, trans-acting factor in ribosome biogenesis required for efficient 40S and 60S subunit production. The chain is Ribosomal biogenesis factor (RBIS) from Bos taurus (Bovine).